A 181-amino-acid chain; its full sequence is Inner membrane-spanning protein YciB (181 aa).

The next 5 helical transmembrane spans lie at 19-39, 50-70, 80-100, 118-138, and 148-168; these read FFDI…QLIA, MHLI…IFHD, IVYA…KPIL, LTWY…YVAF, and FKVF…VVYL.

Belongs to the YciB family.

Its subcellular location is the cell inner membrane. Functionally, plays a role in cell envelope biogenesis, maintenance of cell envelope integrity and membrane homeostasis. The chain is Inner membrane-spanning protein YciB from Shewanella amazonensis (strain ATCC BAA-1098 / SB2B).